The sequence spans 922 residues: Coronin-7 (922 aa).

WD repeat units lie at residues 75–115, 124–163, 166–205, and 209–253; these read CHSD…EALP, PEELPVEVLQFHPTVDGVLVSTAGKTVKVWDVAKQQPLTE, AHKDLVQSAVWSRDGAIVGTACKDKQLRIFDPRARTQASQ, and AHEN…SALA. Positions 419 to 467 are disordered; the sequence is DTDLSEGFSSPSSLMSPSTPSSLGPSLSSTSGIGTSPSQRSLQSLLGPS. The span at 427 to 456 shows a compositional bias: low complexity; sequence SSPSSLMSPSTPSSLGPSLSSTSGIGTSPS. Phosphoserine occurs at positions 459 and 462. Lys-469 is covalently cross-linked (Glycyl lysine isopeptide (Lys-Gly) (interchain with G-Cter in ubiquitin)). WD repeat units follow at residues 539–581, 589–629, 632–671, and 725–765; these read QNGT…NVLT, GHTE…ERLK, GHQDQIFSLAWSPDGKQLATVCKDGHVRVYEPRSSPLPLQ, and DVAP…PFFL. Residues 858–922 form a disordered region; sequence GMTPVSQAPR…FEGVDEDEWD (65 aa). A compositionally biased stretch (basic and acidic residues) spans 881-893; it reads LEEKSDQQKKEEL. Phosphoserine is present on Ser-912.

Belongs to the WD repeat coronin family. Interacts with clathrin adapter AP1 complex. This interaction takes place at Golgi membranes and not AP1-positive endosomal membranes. Interacts (when ubiquitinated at Lys-469) with EPS15. In terms of processing, the membrane-associated form is phosphorylated on tyrosine residues. Ubiquitinated via 'Lys-33'-linked ubiquitin chains by the BCR(KLHL20) E3 ubiquitin ligase complex: 'Lys-33'-linked ubiquitination promotes interaction with EPS15 and facilitates actin polymerization at the trans-Golgi network, thereby facilitating post-Golgi trafficking. Deubiquitinated by ZRANB1/TRABID. In the adult, widely expressed with highest levels in brain, thymus and kidney and low levels in skeletal and heart muscle. Not expressed in lung. In the eye, strongly expressed in the outer plexiform layer of the retina. In the intestine, expressed both in terminally differentiated epithelial cells and in crypt epithelium. In the embryo, strongest expression is seen in brain, thymus, intestine, apical epidermal layers of the skin and developing lens fibers of the eye.

It is found in the golgi apparatus membrane. Its subcellular location is the golgi apparatus. The protein localises to the trans-Golgi network. The protein resides in the cytoplasmic vesicle. It localises to the cytoplasm. It is found in the cytosol. Its function is as follows. F-actin regulator involved in anterograde Golgi to endosome transport: upon ubiquitination via 'Lys-33'-linked ubiquitin chains by the BCR(KLHL20) E3 ubiquitin ligase complex, interacts with EPS15 and localizes to the trans-Golgi network, where it promotes actin polymerization, thereby facilitating post-Golgi trafficking. May play a role in the maintenance of the Golgi apparatus morphology. The protein is Coronin-7 (Coro7) of Mus musculus (Mouse).